Consider the following 526-residue polypeptide: ATP synthase subunit alpha (526 aa).

Residue 171–178 (GDRQTGKT) coordinates ATP.

This sequence belongs to the ATPase alpha/beta chains family. F-type ATPases have 2 components, CF(1) - the catalytic core - and CF(0) - the membrane proton channel. CF(1) has five subunits: alpha(3), beta(3), gamma(1), delta(1), epsilon(1). CF(0) has four main subunits: a(1), b(1), b'(1) and c(9-12).

The protein localises to the cell inner membrane. The enzyme catalyses ATP + H2O + 4 H(+)(in) = ADP + phosphate + 5 H(+)(out). Produces ATP from ADP in the presence of a proton gradient across the membrane. The alpha chain is a regulatory subunit. In Chlorobaculum tepidum (strain ATCC 49652 / DSM 12025 / NBRC 103806 / TLS) (Chlorobium tepidum), this protein is ATP synthase subunit alpha.